A 158-amino-acid chain; its full sequence is Chromobox protein homolog 7 (158 aa).

The Chromo domain occupies 11–69 (FAVESIRKKRVRKGKVEYLVKWKGWPPKYSTWEPEEHILDPRLVMAYEEKEEKDRASGY). A disordered region spans residues 60-124 (KEEKDRASGY…PPPWTPMLPS (65 aa)). Positions 68-78 (GYRKRGPKPKR) are enriched in basic residues.

As to quaternary structure, component of a PRC1-like complex. Distinct PRC1-like core complexes are composed of a RING1 subunit (RING1B or RING1A), one of the six PCGF proteins (PCGF1-6), one PHC protein (PHC1-3) and one of the CBX proteins (CBX2, CBX4, CBX6, CBX7 or CBX8). The composition of the PRC1 complex may differ between the PRC1 complex in pluripotent embryonic stem cells containing RNF2, CBX7 and PCGF2, and the PRC1 complex in differentiating cells containing RNF2, CBX2, CBX4 and BMI1. Interacts with RING1. Interacts with RNF2/RING1B. Interacts with PCGF1, PCGF2, PCGF3, PCGF5 and PCGF6. Interacts (via chromodomain) with histone H3K9Me3 and H3K27me3. Interacts with H3K9Me2 and H4K20Me1. Interacts (via chromodomain) with single-stranded and double-stranded RNA; RNA binding seems to be required for the localization to chromatin.

It localises to the nucleus. It is found in the chromosome. In terms of biological role, component of a Polycomb group (PcG) multiprotein PRC1-like complex, a complex class required to maintain the transcriptionally repressive state of many genes, including Hox genes, throughout development. PcG PRC1 complex acts via chromatin remodeling and modification of histones; it mediates monoubiquitination of histone H2A 'Lys-119', rendering chromatin heritably changed in its expressibility. Promotes histone H3 trimethylation at 'Lys-9' (H3K9me3). Binds to histone H3 trimethylated 'Lys-9' (H3K9me3) or at 'Lys-27' (H3K27me3). May possibly also bind trimethylated lysine residues in other proteins (in vitro). Binds non-coding, single-stranded and double-stranded RNA. Plays a role in the timely repression of differentiation-specific genes in pluripotent embryonic stem cells to maintain the undifferentiated state. Regulator of cellular lifespan by maintaining the repression of CDKN2A, but not by inducing telomerase activity. In Rattus norvegicus (Rat), this protein is Chromobox protein homolog 7 (Cbx7).